The primary structure comprises 70 residues: Conotoxin TsMLKM-011 (70 aa).

The first 24 residues, 1 to 24 (MLKMGVVLFVFLVLFPLATLQLDA), serve as a signal peptide directing secretion. The propeptide occupies 25–54 (DQPVERYAENKQLVSPYERRQIILHALGQR). 3 disulfide bridges follow: C56-C66, C57-C68, and C62-C69.

The protein belongs to the conotoxin M superfamily. As to expression, expressed by the venom duct.

It localises to the secreted. This is Conotoxin TsMLKM-011 from Conus tessulatus (Tessellate cone).